We begin with the raw amino-acid sequence, 285 residues long: Bifunctional protein FolD (285 aa).

Residues 165–167 (GRS), Ser190, and Ile231 contribute to the NADP(+) site.

Belongs to the tetrahydrofolate dehydrogenase/cyclohydrolase family. As to quaternary structure, homodimer.

The enzyme catalyses (6R)-5,10-methylene-5,6,7,8-tetrahydrofolate + NADP(+) = (6R)-5,10-methenyltetrahydrofolate + NADPH. It catalyses the reaction (6R)-5,10-methenyltetrahydrofolate + H2O = (6R)-10-formyltetrahydrofolate + H(+). It participates in one-carbon metabolism; tetrahydrofolate interconversion. In terms of biological role, catalyzes the oxidation of 5,10-methylenetetrahydrofolate to 5,10-methenyltetrahydrofolate and then the hydrolysis of 5,10-methenyltetrahydrofolate to 10-formyltetrahydrofolate. This Magnetococcus marinus (strain ATCC BAA-1437 / JCM 17883 / MC-1) protein is Bifunctional protein FolD.